Here is a 241-residue protein sequence, read N- to C-terminus: Small ribosomal subunit protein uS2 (241 aa).

This sequence belongs to the universal ribosomal protein uS2 family.

In Yersinia pestis bv. Antiqua (strain Antiqua), this protein is Small ribosomal subunit protein uS2.